The sequence spans 540 residues: MNTAVTLLTEQAPQPIEEFGQLERQIIIILDFGSQYSELIARRIRETQVYSEVLSYRTSAEHLRQLNPKGIILSGGPSSVYSDRAPHCDPEIWNLGVPILGVCYGMQLMVNQLGGEVAKADRGEYGKASLHIDDPTDLLTNVEDGTTMWMSHGDSVTKMPPGFEVLAHTDNTPCAAVADHDKKLYGVQFHPEVVHSIGGLALIRNFVYHICECEPTWTTAAFVEEAIREVRAKVGDKRVLLALSGGVDSSTLAFLMHKAIGDQLTCVFIDQGFMRKYEPERLVKLFQEQFHIPVEYVNARDRFLDIMVGVTDPEEKRRRIGHEFIQVFEETSRNLGPFDYLAQGTLYPDVIESADTNVDPQTGERVAVKIKSHHNVGGLPKDLRFKLVEPLRKLFKDEVRKVGRSVGLPEEIVQRQPFPGPGLAIRILGEVTADRLNILRDADLIVRQEINQRGLYNEYWQAFAVLLPIRSVGVMGDQRTYAYPIVLRIVKSEDGMTADWARVPYDVLEAISNRIVNEVKGVNRVVFDITSKPPGTIEWE.

The region spanning I26 to T216 is the Glutamine amidotransferase type-1 domain. C103 (nucleophile) is an active-site residue. Catalysis depends on residues H190 and E192. In terms of domain architecture, GMPS ATP-PPase spans W217–R415. Residue S244–S250 participates in ATP binding.

As to quaternary structure, homodimer.

The enzyme catalyses XMP + L-glutamine + ATP + H2O = GMP + L-glutamate + AMP + diphosphate + 2 H(+). It functions in the pathway purine metabolism; GMP biosynthesis; GMP from XMP (L-Gln route): step 1/1. Catalyzes the synthesis of GMP from XMP. This chain is GMP synthase [glutamine-hydrolyzing], found in Trichormus variabilis (strain ATCC 29413 / PCC 7937) (Anabaena variabilis).